Reading from the N-terminus, the 527-residue chain is Flavonoid 3',5'-hydroxylase CYP75B138 (527 aa).

A helical membrane pass occupies residues 6–26 (LDIILFISAIVFLSIYYYNLF). Heme is bound at residue cysteine 459.

It belongs to the cytochrome P450 family. Requires heme as cofactor. Expressed in young cromes.

The protein resides in the membrane. It catalyses the reaction a 3',5'-unsubstituted flavanone + 2 reduced [NADPH--hemoprotein reductase] + 2 O2 = a 3',5'-dihydroxyflavanone + 2 oxidized [NADPH--hemoprotein reductase] + 2 H2O + 2 H(+). It carries out the reaction (2S)-naringenin + 2 reduced [NADPH--hemoprotein reductase] + 2 O2 = (2S)-dihydrotricetin + 2 oxidized [NADPH--hemoprotein reductase] + 2 H2O + 2 H(+). The enzyme catalyses (2R,3R)-dihydrokaempferol + 2 reduced [NADPH--hemoprotein reductase] + 2 O2 = (2R,3R)-dihydromyricetin + 2 oxidized [NADPH--hemoprotein reductase] + 2 H2O + 2 H(+). The catalysed reaction is kaempferol + 2 reduced [NADPH--hemoprotein reductase] + 2 O2 = myricetin + 2 oxidized [NADPH--hemoprotein reductase] + 2 H2O + 2 H(+). It participates in flavonoid metabolism. Its function is as follows. Flavonoid 3',5'-hydroxylase that catalyzes the 3'- and 5'-hydroxylation of flavanones, dihydroflavonols and flavonols. Converts narigenin to dihydrotricetin, dihydrokaempferol to dihydromyricetin and kaempferol to myricetin. This is Flavonoid 3',5'-hydroxylase CYP75B138 from Crocosmia x crocosmiiflora (Montbretia).